The primary structure comprises 578 residues: Frizzled-2 (578 aa).

Residues methionine 1–alanine 17 form the signal peptide. Residues leucine 18–tryptophan 236 are Extracellular-facing. The FZ domain maps to glycine 20–proline 144. Intrachain disulfides connect cysteine 25–cysteine 86, cysteine 33–cysteine 79, cysteine 70–cysteine 108, cysteine 97–cysteine 141, and cysteine 101–cysteine 125. Asparagine 39 carries an N-linked (GlcNAc...) asparagine glycan. The segment at glycine 138–proline 175 is disordered. The segment covering lysine 150 to asparagine 159 has biased composition (basic residues). The span at glutamine 160–asparagine 169 shows a compositional bias: low complexity. Asparagine 213 is a glycosylation site (N-linked (GlcNAc...) asparagine). Residues methionine 237–isoleucine 257 form a helical membrane-spanning segment. The Cytoplasmic segment spans residues glutamate 258–proline 268. Residues isoleucine 269–valine 289 form a helical membrane-spanning segment. At glycine 290–cysteine 312 the chain is on the extracellular side. A helical membrane pass occupies residues phenylalanine 313–leucine 333. The Cytoplasmic portion of the chain corresponds to serine 334–serine 354. Residues phenylalanine 355 to phenylalanine 375 traverse the membrane as a helical segment. Topologically, residues asparagine 376–arginine 398 are extracellular. The helical transmembrane segment at isoleucine 399 to glycine 419 threads the bilayer. Over phenylalanine 420–lysine 449 the chain is Cytoplasmic. A helical transmembrane segment spans residues isoleucine 450 to tyrosine 470. At glutamate 471 to leucine 497 the chain is on the extracellular side. Residues isoleucine 498–valine 518 traverse the membrane as a helical segment. Residues cysteine 519–leucine 578 are Cytoplasmic-facing. Positions lysine 522–tryptophan 527 match the Lys-Thr-X-X-X-Trp motif, mediates interaction with the PDZ domain of Dvl family members motif. The PDZ-binding motif lies at serine 556–serine 558.

The protein belongs to the G-protein coupled receptor Fz/Smo family. In terms of tissue distribution, expressed in two pairs of head neurons and throughout the pharynx.

Its subcellular location is the cell membrane. In terms of biological role, receptor for Wnt proteins. Most frizzled receptors are coupled to the beta-catenin canonical signaling pathway, which leads to the activation of disheveled proteins, inhibition of gsk-3 kinase, nuclear accumulation of beta-catenin and activation of Wnt target genes. A second signaling pathway involving PKC and calcium fluxes has been seen for some family members, but it is not yet clear if it represents a distinct pathway or if it can be integrated in the canonical pathway, as PKC seems to be required for Wnt-mediated inactivation of gsk-3 kinase. Both pathways seem to involve interactions with G-proteins. Required for the migration and axon formation and guidance of different neuronal cell types including canal-associated neurons (CAN), hermaphrodite-specific neurons (HSN), anterior lateral microtubule neurons (ALM), and the right Q neuroblast (QR) and its descendants. Directs ALM migration through frizzled protein mom-5 and Wnt ligands cwn-1, cwn-2 and egl-20. May act redundantly with mom-5 to direct CAN migration. Plays a role in the organization of head ganglion cells. Probably by acting as a receptor for Wnt ligand cwn-2, plays a role in the positioning of the nerve ring and may in addition positively regulate the neurite outgrowth of RME GABAergic motor neurons along the anterior-posterior axis of the body. The protein is Frizzled-2 of Caenorhabditis elegans.